The sequence spans 75 residues: Putative snRNP Sm-like protein (75 aa).

Residues 4 to 75 (RPLDVIHRSL…NVLAISPTEE (72 aa)) form the Sm domain.

This sequence belongs to the snRNP Sm proteins family.

The protein is Putative snRNP Sm-like protein of Pyrococcus abyssi (strain GE5 / Orsay).